A 450-amino-acid chain; its full sequence is Phosphoglucosamine mutase (450 aa).

The Phosphoserine intermediate role is filled by serine 102. Positions 102, 243, 245, and 247 each coordinate Mg(2+). The residue at position 102 (serine 102) is a Phosphoserine.

Belongs to the phosphohexose mutase family. Mg(2+) serves as cofactor. Activated by phosphorylation.

It catalyses the reaction alpha-D-glucosamine 1-phosphate = D-glucosamine 6-phosphate. Catalyzes the conversion of glucosamine-6-phosphate to glucosamine-1-phosphate. The protein is Phosphoglucosamine mutase of Rhizobium etli (strain ATCC 51251 / DSM 11541 / JCM 21823 / NBRC 15573 / CFN 42).